The primary structure comprises 142 residues: Small heat shock protein IbpB (142 aa).

One can recognise a sHSP domain in the interval 26-137 (AGEGQSFPPY…AAQRIAISER (112 aa)).

Belongs to the small heat shock protein (HSP20) family. In terms of assembly, homodimer. Forms homomultimers of about 100-150 subunits at optimal growth temperatures. Conformation changes to oligomers at high temperatures or high ionic concentrations. The decrease in size of the multimers is accompanied by an increase in chaperone activity.

The protein resides in the cytoplasm. Functionally, associates with aggregated proteins, together with IbpA, to stabilize and protect them from irreversible denaturation and extensive proteolysis during heat shock and oxidative stress. Aggregated proteins bound to the IbpAB complex are more efficiently refolded and reactivated by the ATP-dependent chaperone systems ClpB and DnaK/DnaJ/GrpE. Its activity is ATP-independent. The polypeptide is Small heat shock protein IbpB (Shigella boydii serotype 18 (strain CDC 3083-94 / BS512)).